A 425-amino-acid chain; its full sequence is Gamma-glutamyl phosphate reductase (425 aa).

The protein belongs to the gamma-glutamyl phosphate reductase family.

Its subcellular location is the cytoplasm. It catalyses the reaction L-glutamate 5-semialdehyde + phosphate + NADP(+) = L-glutamyl 5-phosphate + NADPH + H(+). The protein operates within amino-acid biosynthesis; L-proline biosynthesis; L-glutamate 5-semialdehyde from L-glutamate: step 2/2. Its function is as follows. Catalyzes the NADPH-dependent reduction of L-glutamate 5-phosphate into L-glutamate 5-semialdehyde and phosphate. The product spontaneously undergoes cyclization to form 1-pyrroline-5-carboxylate. This is Gamma-glutamyl phosphate reductase from Aromatoleum aromaticum (strain DSM 19018 / LMG 30748 / EbN1) (Azoarcus sp. (strain EbN1)).